The sequence spans 515 residues: GMP synthase [glutamine-hydrolyzing] (515 aa).

In terms of domain architecture, Glutamine amidotransferase type-1 spans 6-198 (KVIILDFGSQ…VFKVAGLKAD (193 aa)). The active-site Nucleophile is the C83. Residues H172 and E174 contribute to the active site. Positions 199–390 (WTMSSFVENC…LGLPEFIIWR (192 aa)) constitute a GMPS ATP-PPase domain. 226–232 (SGGIDST) is an ATP binding site.

In terms of assembly, homodimer.

The catalysed reaction is XMP + L-glutamine + ATP + H2O = GMP + L-glutamate + AMP + diphosphate + 2 H(+). Its pathway is purine metabolism; GMP biosynthesis; GMP from XMP (L-Gln route): step 1/1. Functionally, catalyzes the synthesis of GMP from XMP. This Maridesulfovibrio salexigens (strain ATCC 14822 / DSM 2638 / NCIMB 8403 / VKM B-1763) (Desulfovibrio salexigens) protein is GMP synthase [glutamine-hydrolyzing].